Reading from the N-terminus, the 38-residue chain is Cytochrome b6-f complex subunit 5 (38 aa).

The chain crosses the membrane as a helical span at residues 5 to 25 (LLLGIVLGLIPVTLAGLFVAA).

This sequence belongs to the PetG family. In terms of assembly, the 4 large subunits of the cytochrome b6-f complex are cytochrome b6, subunit IV (17 kDa polypeptide, PetD), cytochrome f and the Rieske protein, while the 4 small subunits are PetG, PetL, PetM and PetN. The complex functions as a dimer.

The protein resides in the cellular thylakoid membrane. Component of the cytochrome b6-f complex, which mediates electron transfer between photosystem II (PSII) and photosystem I (PSI), cyclic electron flow around PSI, and state transitions. PetG is required for either the stability or assembly of the cytochrome b6-f complex. The polypeptide is Cytochrome b6-f complex subunit 5 (Picosynechococcus sp. (strain ATCC 27264 / PCC 7002 / PR-6) (Agmenellum quadruplicatum)).